Reading from the N-terminus, the 134-residue chain is Fatty acid-binding protein, muscle (134 aa).

Residues R109 and 129-131 (RIY) contribute to the (9Z)-octadecenoate site.

This sequence belongs to the calycin superfamily. Fatty-acid binding protein (FABP) family. As to quaternary structure, monomer. In terms of tissue distribution, adult flight muscle.

It is found in the cytoplasm. Functionally, binds fatty acids in a 1:1 molar ratio. The chain is Fatty acid-binding protein, muscle from Schistocerca gregaria (Desert locust).